A 262-amino-acid polypeptide reads, in one-letter code: Putative hydro-lyase RHA1_ro03475 (262 aa).

It belongs to the D-glutamate cyclase family.

The sequence is that of Putative hydro-lyase RHA1_ro03475 from Rhodococcus jostii (strain RHA1).